A 288-amino-acid chain; its full sequence is Acetylglutamate kinase (288 aa).

Substrate is bound by residues 73–74 (GG), Arg-95, and Asn-186.

This sequence belongs to the acetylglutamate kinase family. ArgB subfamily.

The protein resides in the cytoplasm. The enzyme catalyses N-acetyl-L-glutamate + ATP = N-acetyl-L-glutamyl 5-phosphate + ADP. It participates in amino-acid biosynthesis; L-arginine biosynthesis; N(2)-acetyl-L-ornithine from L-glutamate: step 2/4. Functionally, catalyzes the ATP-dependent phosphorylation of N-acetyl-L-glutamate. This is Acetylglutamate kinase from Pelagibacter ubique (strain HTCC1062).